The sequence spans 414 residues: Serine/threonine-protein kinase 32B (414 aa).

Residues 23 to 283 (FQILRAIGKG…LHDIQSVPYL (261 aa)) form the Protein kinase domain. ATP-binding positions include 29–37 (IGKGSFGKV) and Lys52. Asp146 acts as the Proton acceptor in catalysis. A disordered region spans residues 374 to 396 (QGQGSQLLDTDSRGGGQAQSKLQ).

It belongs to the protein kinase superfamily. Ser/Thr protein kinase family. It depends on Mg(2+) as a cofactor.

It carries out the reaction L-seryl-[protein] + ATP = O-phospho-L-seryl-[protein] + ADP + H(+). The enzyme catalyses L-threonyl-[protein] + ATP = O-phospho-L-threonyl-[protein] + ADP + H(+). The polypeptide is Serine/threonine-protein kinase 32B (Homo sapiens (Human)).